The chain runs to 130 residues: Iron-sulfur cluster assembly 1 homolog, mitochondrial (130 aa).

Residues 1–24 (MATRVVATATVRAVKGRKLIPTRA) constitute a mitochondrion transit peptide. The Fe cation site is built by Cys-58, Cys-122, and Cys-124.

This sequence belongs to the HesB/IscA family. As to quaternary structure, interacts with cry. Detected in head.

The protein localises to the mitochondrion. Its function is as follows. Involved in the assembly of mitochondrial iron-sulfur proteins. Probably involved in the binding of an intermediate of Fe/S cluster assembly. Required for maintenance of circadian rhythms under constant darkness. This chain is Iron-sulfur cluster assembly 1 homolog, mitochondrial, found in Drosophila melanogaster (Fruit fly).